Reading from the N-terminus, the 405-residue chain is Argininosuccinate synthase (405 aa).

Residue 9-17 coordinates ATP; the sequence is AYSGGLDTS. L-citrulline is bound by residues tyrosine 87 and serine 92. Glycine 117 contacts ATP. L-aspartate contacts are provided by threonine 119, asparagine 123, and aspartate 124. Asparagine 123 lines the L-citrulline pocket. The L-citrulline site is built by arginine 127, serine 176, serine 185, glutamate 262, and tyrosine 274.

It belongs to the argininosuccinate synthase family. Type 1 subfamily. In terms of assembly, homotetramer.

The protein resides in the cytoplasm. It catalyses the reaction L-citrulline + L-aspartate + ATP = 2-(N(omega)-L-arginino)succinate + AMP + diphosphate + H(+). It functions in the pathway amino-acid biosynthesis; L-arginine biosynthesis; L-arginine from L-ornithine and carbamoyl phosphate: step 2/3. The sequence is that of Argininosuccinate synthase from Caldicellulosiruptor saccharolyticus (strain ATCC 43494 / DSM 8903 / Tp8T 6331).